The following is a 265-amino-acid chain: 14-3-3-like protein GF14 nu (265 aa).

A phosphoserine mark is found at Ser67, Ser109, and Ser190. At Thr211 the chain carries Phosphothreonine. A disordered region spans residues 242–265 (AGGDEIKEASKHEPEEGKPAETGQ). Residues 245 to 265 (DEIKEASKHEPEEGKPAETGQ) show a composition bias toward basic and acidic residues.

It belongs to the 14-3-3 family. Component of the SERK1 signaling complex, composed of KAPP, CDC48A, GRF6 or GRF7, SERK1, SERK2, SERK3/BAK1 and BRI1. Interacts with DREB1A and DREB1B in the nucleus. Interacts with CINV1.

The protein localises to the nucleus. It is found in the cytoplasm. Is associated with a DNA binding complex that binds to the G box, a well-characterized cis-acting DNA regulatory element found in plant genes. This is 14-3-3-like protein GF14 nu (GRF7) from Arabidopsis thaliana (Mouse-ear cress).